The sequence spans 49 residues: Large ribosomal subunit protein bL33B (49 aa).

This sequence belongs to the bacterial ribosomal protein bL33 family.

This chain is Large ribosomal subunit protein bL33B, found in Bacillus licheniformis (strain ATCC 14580 / DSM 13 / JCM 2505 / CCUG 7422 / NBRC 12200 / NCIMB 9375 / NCTC 10341 / NRRL NRS-1264 / Gibson 46).